Here is a 229-residue protein sequence, read N- to C-terminus: Potassium/proton antiporter CemA (229 aa).

A run of 3 helical transmembrane segments spans residues 7 to 27, 107 to 127, and 189 to 209; these read FTPL…SLLF, ILHF…SIFG, and IISG…KYWI.

Belongs to the CemA family.

The protein resides in the plastid. It is found in the chloroplast inner membrane. It carries out the reaction K(+)(in) + H(+)(out) = K(+)(out) + H(+)(in). In terms of biological role, contributes to K(+)/H(+) antiport activity by supporting proton efflux to control proton extrusion and homeostasis in chloroplasts in a light-dependent manner to modulate photosynthesis. Prevents excessive induction of non-photochemical quenching (NPQ) under continuous-light conditions. Indirectly promotes efficient inorganic carbon uptake into chloroplasts. This is Potassium/proton antiporter CemA from Guizotia abyssinica (Niger).